Here is a 47-residue protein sequence, read N- to C-terminus: Sperm protamine P1 (47 aa).

It belongs to the protamine P1 family. In terms of tissue distribution, testis.

The protein localises to the nucleus. It is found in the chromosome. Its function is as follows. Protamines substitute for histones in the chromatin of sperm during the haploid phase of spermatogenesis. They compact sperm DNA into a highly condensed, stable and inactive complex. The polypeptide is Sperm protamine P1 (PRM1) (Galeopterus variegatus (Malayan flying lemur)).